The sequence spans 337 residues: MIARIWSGASRLYWLLLPFSWLYGLITALIRFSYRRGWRKVHRFPLPIVVVGNLTAGGNGKTPVVLWLVAQLQQRGWRVGVVSRGYGGRAARYPLLLDATTTSDQCGDEPLLIWQRTGAPVAVAPRRSEAVAALLRAQSLDVVVTDDGLQHYALGRDIEWVVIDGERRFGNGWWLPAGPMRERAGRLQTVQAVIVNGGDARPGEVPMRLAAGPAVNLLSGERRALASLAPIVAIAGIGHPPRFFATLRAGGVTPVREVAFGDHQAYQQQMLDALVALEERLLMTEKDAVKCRAFARANWWYLPVDAQLPAGAEEALLTPILQAIRRCRPTADGEAKL.

Position 55 to 62 (55 to 62 (TAGGNGKT)) interacts with ATP.

Belongs to the LpxK family.

It carries out the reaction a lipid A disaccharide + ATP = a lipid IVA + ADP + H(+). It participates in glycolipid biosynthesis; lipid IV(A) biosynthesis; lipid IV(A) from (3R)-3-hydroxytetradecanoyl-[acyl-carrier-protein] and UDP-N-acetyl-alpha-D-glucosamine: step 6/6. Its function is as follows. Transfers the gamma-phosphate of ATP to the 4'-position of a tetraacyldisaccharide 1-phosphate intermediate (termed DS-1-P) to form tetraacyldisaccharide 1,4'-bis-phosphate (lipid IVA). The sequence is that of Tetraacyldisaccharide 4'-kinase from Sodalis glossinidius (strain morsitans).